Consider the following 198-residue polypeptide: Single-stranded DNA cytosine deaminase (198 aa).

Residues Met-1–Cys-30 carry the Bipartite nuclear localization signal motif. Residues Asp-2 to Glu-26 are interaction with SUPT6H. In terms of domain architecture, CMP/dCMP-type deaminase spans Gly-23–Leu-129. Thr-27 carries the post-translational modification Phosphothreonine; by PKA. Ser-38 is subject to Phosphoserine; by PKA. The interval Ala-39–Phe-42 is important for interaction with CTNNBL1. Residue His-56 participates in Zn(2+) binding. The active-site Proton donor is Glu-58. Residues Cys-87 and Cys-90 each coordinate Zn(2+). Residues Tyr-88–Cys-116 are required for interaction with RNF126. A Nuclear export signal motif is present at residues Leu-183–Leu-198.

The protein belongs to the cytidine and deoxycytidylate deaminase family. Interacts with CTNNBL1; the interaction is important for the immunoglobulin switch activity of AICDA. Interacts (via its NLS) with KPNA1. Interacts with PKA/PRKACA and PRKAR1A/PKR1. Interacts with TRIM28 and NCL. Interacts with SUPT6H. Interacts with RNF126. Directly interacts with MCM3AP; this interaction may favor AICDA recruitment to immunoglobulin variable region genes, hence promoting somatic hypermutations. The cofactor is Zn(2+). Post-translationally, ser-38 is the major site whereas Thr-27 is the minor site of phosphorylation. Phosphorylation regulates its class-switch recombination activity. In terms of processing, probably monoubiquitinated on several residues by RNF126. Strongly expressed in lymph nodes and tonsils.

It localises to the nucleus. The protein localises to the cytoplasm. The protein resides in the cytosol. The enzyme catalyses a 2'-deoxycytidine in single-stranded DNA + H2O + H(+) = a 2'-deoxyuridine in single-stranded DNA + NH4(+). Single-stranded DNA-specific cytidine deaminase. Involved in somatic hypermutation (SHM), gene conversion, and class-switch recombination (CSR) in B-lymphocytes by deaminating C to U during transcription of Ig-variable (V) and Ig-switch (S) region DNA. Required for several crucial steps of B-cell terminal differentiation necessary for efficient antibody responses. May also play a role in the epigenetic regulation of gene expression by participating in DNA demethylation. The protein is Single-stranded DNA cytosine deaminase (AICDA) of Homo sapiens (Human).